Here is a 748-residue protein sequence, read N- to C-terminus: Sulfhydryl oxidase 1 (748 aa).

The first 32 residues, 1-32 (MRRCGRLSGPPSLLLLLLLLSPLLFSGPGAYA), serve as a signal peptide directing secretion. A Thioredoxin domain is found at 33–159 (ARLSVLYSSS…RMRLIDALES (127 aa)). Active-site nucleophile residues include Cys73 and Cys76. 2 disulfides stabilise this stretch: Cys73/Cys76 and Cys104/Cys113. N-linked (GlcNAc...) asparagine glycans are attached at residues Asn133 and Asn246. Cys396 and Cys408 are disulfide-bonded. The ERV/ALR sulfhydryl oxidase domain occupies 399 to 506 (SEPHFRGFPC…EDPHFPKVQW (108 aa)). FAD is bound by residues Arg404, Trp411, His415, Asp454, His458, 481–488 (WTSHNRVN), Lys503, and Trp506. Cys452 and Cys455 are oxidised to a cystine. Residues Cys512 and Cys515 are joined by a disulfide bond. The segment at 581 to 647 (GHEQAASAES…QENAPGQQHL (67 aa)) is disordered. Over residues 628–638 (ERMEDHQRDMQ) the composition is skewed to basic and acidic residues. A helical membrane pass occupies residues 711–731 (ISLCVGLYSVSFMGLLAMYTY).

This sequence belongs to the quiescin-sulfhydryl oxidase (QSOX) family. Monomer. Requires FAD as cofactor. N-glycosylated. O-glycosylated on Thr and Ser residues. As to expression, detected in skin (at protein level). Expressed in the seminal vesicles and skin.

The protein resides in the golgi apparatus membrane. The protein localises to the secreted. It carries out the reaction 2 R'C(R)SH + O2 = R'C(R)S-S(R)CR' + H2O2. In terms of biological role, catalyzes the oxidation of sulfhydryl groups in peptide and protein thiols to disulfides with the reduction of oxygen to hydrogen peroxide. Plays a role in disulfide bond formation in a variety of extracellular proteins. In fibroblasts, required for normal incorporation of laminin into the extracellular matrix, and thereby for normal cell-cell adhesion and cell migration. This chain is Sulfhydryl oxidase 1 (Qsox1), found in Mus musculus (Mouse).